The sequence spans 550 residues: MKTKFIFITGGVLSSLGKGLSAASIGALLTSRGMTVTIQKLDPYINIDPGTMNPYQHGEVYVTDDGAEADLDLGHYERFLGTSLSQKNNSTSGAIYYKVISKERRGDYLGATVQVIPHITDEIKSTILSLAKSSIDNNTPDIAIIEIGGTIGDIEGLPFLEAIRQLQTDLGRQNCLYIHLTLVPYLGTAGEHKTKPTQHSVKELRSIGIQPNIILCRCEKPIPDDIKAKISLFCDVEKDAVFSAADINNIYELPLKFYTEGLDQKITSFLNLPTKQANLKPWEQLVNTINNPKGKVTITIVGKYVGLTEAYKSLHEALCHGGIANEITVDLQYVNSEIITEDNVNEIFKGVDGILVPGGFGSRGIEGKIESIRYARQKNIPFFGICLGMQCAVIEFARNVAGIEKANSEEFNPVAADKVIYLMKEWYDFRNNAIEYRDSLCDKGGTMRLGSYPCTLIKNTKAFKAYQTDSIEERHRHRYEFNNIYRDQFAEKGMIFSGTSPDNTLVEIIELLNHPWFIGCQFHPEFKSYPMKPHPLFKDFIHAACNHNKQ.

An amidoligase domain region spans residues 1 to 272 (MKTKFIFITG…DQKITSFLNL (272 aa)). Serine 14 is a binding site for CTP. Serine 14 provides a ligand contact to UTP. 15–20 (SLGKGL) serves as a coordination point for ATP. An L-glutamine-binding site is contributed by tyrosine 55. ATP is bound at residue aspartate 72. Mg(2+) is bound by residues aspartate 72 and glutamate 146. Residues 153–155 (DIE), 193–198 (KTKPTQ), and lysine 229 contribute to the CTP site. Residues 193–198 (KTKPTQ) and lysine 229 each bind UTP. Residues 297–550 (TITIVGKYVG…IHAACNHNKQ (254 aa)) form the Glutamine amidotransferase type-1 domain. Glycine 359 lines the L-glutamine pocket. Cysteine 386 serves as the catalytic Nucleophile; for glutamine hydrolysis. L-glutamine contacts are provided by residues 387 to 390 (LGMQ), glutamate 410, and arginine 478. Catalysis depends on residues histidine 523 and glutamate 525.

It belongs to the CTP synthase family. In terms of assembly, homotetramer.

The catalysed reaction is UTP + L-glutamine + ATP + H2O = CTP + L-glutamate + ADP + phosphate + 2 H(+). The enzyme catalyses L-glutamine + H2O = L-glutamate + NH4(+). It carries out the reaction UTP + NH4(+) + ATP = CTP + ADP + phosphate + 2 H(+). The protein operates within pyrimidine metabolism; CTP biosynthesis via de novo pathway; CTP from UDP: step 2/2. With respect to regulation, allosterically activated by GTP, when glutamine is the substrate; GTP has no effect on the reaction when ammonia is the substrate. The allosteric effector GTP functions by stabilizing the protein conformation that binds the tetrahedral intermediate(s) formed during glutamine hydrolysis. Inhibited by the product CTP, via allosteric rather than competitive inhibition. In terms of biological role, catalyzes the ATP-dependent amination of UTP to CTP with either L-glutamine or ammonia as the source of nitrogen. Regulates intracellular CTP levels through interactions with the four ribonucleotide triphosphates. The chain is CTP synthase from Lawsonia intracellularis (strain PHE/MN1-00).